We begin with the raw amino-acid sequence, 211 residues long: FMN-dependent NADH:quinone oxidoreductase 3 (211 aa).

102 to 105 (MWNF) is a binding site for FMN.

Belongs to the azoreductase type 1 family. In terms of assembly, homodimer. FMN serves as cofactor.

It carries out the reaction 2 a quinone + NADH + H(+) = 2 a 1,4-benzosemiquinone + NAD(+). The catalysed reaction is N,N-dimethyl-1,4-phenylenediamine + anthranilate + 2 NAD(+) = 2-(4-dimethylaminophenyl)diazenylbenzoate + 2 NADH + 2 H(+). Its function is as follows. Quinone reductase that provides resistance to thiol-specific stress caused by electrophilic quinones. Also exhibits azoreductase activity. Catalyzes the reductive cleavage of the azo bond in aromatic azo compounds to the corresponding amines. This Bacillus cereus (strain ATCC 10987 / NRS 248) protein is FMN-dependent NADH:quinone oxidoreductase 3.